A 255-amino-acid polypeptide reads, in one-letter code: 1-(5-phosphoribosyl)-5-[(5-phosphoribosylamino)methylideneamino] imidazole-4-carboxamide isomerase (255 aa).

The active-site Proton acceptor is the aspartate 8. Aspartate 129 functions as the Proton donor in the catalytic mechanism.

It belongs to the HisA/HisF family.

The protein localises to the cytoplasm. The catalysed reaction is 1-(5-phospho-beta-D-ribosyl)-5-[(5-phospho-beta-D-ribosylamino)methylideneamino]imidazole-4-carboxamide = 5-[(5-phospho-1-deoxy-D-ribulos-1-ylimino)methylamino]-1-(5-phospho-beta-D-ribosyl)imidazole-4-carboxamide. It participates in amino-acid biosynthesis; L-histidine biosynthesis; L-histidine from 5-phospho-alpha-D-ribose 1-diphosphate: step 4/9. The protein is 1-(5-phosphoribosyl)-5-[(5-phosphoribosylamino)methylideneamino] imidazole-4-carboxamide isomerase of Prochlorococcus marinus (strain MIT 9211).